A 333-amino-acid chain; its full sequence is Glycerol-3-phosphate dehydrogenase [NAD(P)+] (333 aa).

Residues S13, Y14, R34, and K108 each contribute to the NADPH site. Sn-glycerol 3-phosphate contacts are provided by K108, G137, and T139. A141 serves as a coordination point for NADPH. Sn-glycerol 3-phosphate is bound by residues K193, D246, S256, R257, and N258. K193 (proton acceptor) is an active-site residue. R257 contributes to the NADPH binding site. E283 provides a ligand contact to NADPH.

Belongs to the NAD-dependent glycerol-3-phosphate dehydrogenase family.

It is found in the cytoplasm. It catalyses the reaction sn-glycerol 3-phosphate + NAD(+) = dihydroxyacetone phosphate + NADH + H(+). The enzyme catalyses sn-glycerol 3-phosphate + NADP(+) = dihydroxyacetone phosphate + NADPH + H(+). It functions in the pathway membrane lipid metabolism; glycerophospholipid metabolism. Catalyzes the reduction of the glycolytic intermediate dihydroxyacetone phosphate (DHAP) to sn-glycerol 3-phosphate (G3P), the key precursor for phospholipid synthesis. The chain is Glycerol-3-phosphate dehydrogenase [NAD(P)+] from Idiomarina loihiensis (strain ATCC BAA-735 / DSM 15497 / L2-TR).